We begin with the raw amino-acid sequence, 462 residues long: CD-NTase-associated protein 4 (462 aa).

The segment at 1–226 (MSASLLEKQS…FENFICHALE (226 aa)) is N-terminal endonuclease domain. Residues Asp50, Glu67, and Lys69 contribute to the active site. Mg(2+) is bound at residue Asp50. The C-terminal SAVED domain stretch occupies residues 235 to 462 (DPIKINLSAS…QYIPTAELNL (228 aa)). Residues 299-301 (KQR), Trp449, and Tyr454 contribute to the 2',3',3'-c-tri-AMP site.

Belongs to the Cap4 nuclease family. In terms of assembly, a monomer in the absence of ligand, in its presence it forms oligomers. A divalent metal cation serves as cofactor.

With respect to regulation, DNase activity is activated upon ligand binding. Inhibited by EDTA. Its function is as follows. Effector DNase of a CBASS antivirus system. CBASS (cyclic oligonucleotide-based antiphage signaling system) provides immunity against bacteriophage. The CD-NTase protein synthesizes cyclic nucleotides in response to infection; these serve as specific second messenger signals. The signals activate a diverse range of effectors, leading to bacterial cell death and thus abortive phage infection. A type II-C(AAAA) CBASS system. Functionally, binds cyclic nucleotide second messengers (synthesized by CdnD, the cognate CD-NTase in the CBASS operon). Ligand binding activates it to endonucleolytically degrade dsDNA to approximately 6 bp length fragments, with a preference for 5'-C or 5'-G cleavage site. The minor product of CdnD is the activating nucleotide; also binds the major product (2',3',3'-cyclic AMP-AMP-AMP) but is not activated by it. Only binds DNA in the presence of ligand. Is not activated by c-di-AMP, c-di-GMP, 3'3'-cyclic GMP-AMP (3'3'-cGAMP) or 3',3',3'-cyclic AMP-AMP-GMP. The protein is CD-NTase-associated protein 4 of Acinetobacter sp. (strain ATCC 27244 / 9458).